A 393-amino-acid polypeptide reads, in one-letter code: tRNA(Met) cytidine acetate ligase (393 aa).

ATP contacts are provided by Gly-81, Asn-142, and Arg-167.

This sequence belongs to the TmcAL family.

It localises to the cytoplasm. It catalyses the reaction cytidine(34) in elongator tRNA(Met) + acetate + ATP = N(4)-acetylcytidine(34) in elongator tRNA(Met) + AMP + diphosphate. Functionally, catalyzes the formation of N(4)-acetylcytidine (ac(4)C) at the wobble position of elongator tRNA(Met), using acetate and ATP as substrates. First activates an acetate ion to form acetyladenylate (Ac-AMP) and then transfers the acetyl group to tRNA to form ac(4)C34. The protein is tRNA(Met) cytidine acetate ligase of Bacillus cereus (strain 03BB102).